The chain runs to 542 residues: Carbamoyl phosphate synthase large chain, C-terminal section (542 aa).

The segment at 1–389 (MSDKVLVIGA…WKAQLAAGHE (389 aa)) is carbamoyl phosphate synthetic domain. The region spanning 122–316 (SKLLKKLGIP…LAKIGTKAIL (195 aa)) is the ATP-grasp domain. ATP contacts are provided by arginine 158, arginine 197, isoleucine 199, glutamate 204, glycine 230, valine 231, histidine 232, serine 233, glutamine 273, and glutamate 287. Positions 273, 287, and 289 each coordinate Mg(2+). Residues glutamine 273, glutamate 287, and asparagine 289 each contribute to the Mn(2+) site. The MGS-like domain occupies 388 to 542 (HELPLEGTAV…KPEELTRYGG (155 aa)). Residues 390 to 542 (LPLEGTAVIS…KPEELTRYGG (153 aa)) form an allosteric domain region.

Belongs to the CarB family. In terms of assembly, composed of two chains; the small (or glutamine) chain promotes the hydrolysis of glutamine to ammonia, which is used by the large (or ammonia) chain to synthesize carbamoyl phosphate. Tetramer of heterodimers (alpha,beta)4. The cofactor is Mg(2+). It depends on Mn(2+) as a cofactor.

The enzyme catalyses hydrogencarbonate + L-glutamine + 2 ATP + H2O = carbamoyl phosphate + L-glutamate + 2 ADP + phosphate + 2 H(+). It carries out the reaction hydrogencarbonate + NH4(+) + 2 ATP = carbamoyl phosphate + 2 ADP + phosphate + 2 H(+). The protein operates within amino-acid biosynthesis; L-arginine biosynthesis; carbamoyl phosphate from bicarbonate: step 1/1. Its pathway is pyrimidine metabolism; UMP biosynthesis via de novo pathway; (S)-dihydroorotate from bicarbonate: step 1/3. Its function is as follows. Large subunit of the glutamine-dependent carbamoyl phosphate synthetase (CPSase). CPSase catalyzes the formation of carbamoyl phosphate from the ammonia moiety of glutamine, carbonate, and phosphate donated by ATP, constituting the first step of 2 biosynthetic pathways, one leading to arginine and/or urea and the other to pyrimidine nucleotides. The large subunit (synthetase) binds the substrates ammonia (free or transferred from glutamine from the small subunit), hydrogencarbonate and ATP and carries out an ATP-coupled ligase reaction, activating hydrogencarbonate by forming carboxy phosphate which reacts with ammonia to form carbamoyl phosphate. The sequence is that of Carbamoyl phosphate synthase large chain, C-terminal section (carB2) from Methanopyrus kandleri (strain AV19 / DSM 6324 / JCM 9639 / NBRC 100938).